Reading from the N-terminus, the 149-residue chain is 3-dehydroquinate dehydratase (149 aa).

The Proton acceptor role is filled by Y23. Substrate-binding residues include N75, H81, and D88. H101 functions as the Proton donor in the catalytic mechanism. Residues 102-103 (LS) and R112 each bind substrate.

It belongs to the type-II 3-dehydroquinase family. In terms of assembly, homododecamer.

The catalysed reaction is 3-dehydroquinate = 3-dehydroshikimate + H2O. It participates in metabolic intermediate biosynthesis; chorismate biosynthesis; chorismate from D-erythrose 4-phosphate and phosphoenolpyruvate: step 3/7. Its function is as follows. Catalyzes a trans-dehydration via an enolate intermediate. The protein is 3-dehydroquinate dehydratase of Stenotrophomonas maltophilia (strain R551-3).